We begin with the raw amino-acid sequence, 508 residues long: Photosystem II CP47 reaction center protein (508 aa).

6 helical membrane-spanning segments follow: residues 21–36 (SVHIMHTALVAGWAGS), 101–115 (IVFSGLCFLAAIWHW), 140–156 (GIHLFLSGVACFGFGAF), 203–218 (IAAGTLGILAGLFHLS), 237–252 (VLSSSIAAVFFAAFVV), and 457–472 (SFALLFFFGHIWHGAR).

This sequence belongs to the PsbB/PsbC family. PsbB subfamily. PSII is composed of 1 copy each of membrane proteins PsbA, PsbB, PsbC, PsbD, PsbE, PsbF, PsbH, PsbI, PsbJ, PsbK, PsbL, PsbM, PsbT, PsbX, PsbY, PsbZ, Psb30/Ycf12, at least 3 peripheral proteins of the oxygen-evolving complex and a large number of cofactors. It forms dimeric complexes. The cofactor is Binds multiple chlorophylls. PSII binds additional chlorophylls, carotenoids and specific lipids..

It is found in the plastid. The protein localises to the chloroplast thylakoid membrane. One of the components of the core complex of photosystem II (PSII). It binds chlorophyll and helps catalyze the primary light-induced photochemical processes of PSII. PSII is a light-driven water:plastoquinone oxidoreductase, using light energy to abstract electrons from H(2)O, generating O(2) and a proton gradient subsequently used for ATP formation. This is Photosystem II CP47 reaction center protein from Lemna minor (Common duckweed).